An 862-amino-acid chain; its full sequence is Short transient receptor potential channel 7 (862 aa).

Residues 1-21 (MLRNSTFKNMQRRHTTLREKG) are disordered. Topologically, residues 1-351 (MLRNSTFKNM…GLRQQSIAVK (351 aa)) are cytoplasmic. Residues 10–21 (MQRRHTTLREKG) show a composition bias toward basic residues. T15 is modified (phosphothreonine; by PKG/PRKG1). ANK repeat units lie at residues 42–71 (PEEE…TLNF), 77–106 (MGQN…LARV), 108–134 (DALL…FAQG), and 163–192 (HDIT…RIER). A helical membrane pass occupies residues 352–372 (FLAVFGVSIGLPFLAIAYWIA). Over 373 to 383 (PCSKLGRTLRS) the chain is Extracellular. Residues 384–404 (PFMKFVAHAVSFTIFLGLLVV) traverse the membrane as a helical segment. Over 405–465 (NASDRFEGVK…KEIWEEGPRE (61 aa)) the chain is Cytoplasmic. The helical transmembrane segment at 466–486 (YVLHLWNLLDFGMLSIFVASF) threads the bilayer. The Extracellular segment spans residues 487–537 (TARFMAFLKATEAQLYVDQHVQDDTLHNVSLPPEVAYFTYARDKWWPSDPQ). N514 carries an N-linked (GlcNAc...) asparagine glycan. A helical membrane pass occupies residues 538–558 (IISEGLYAIAVVLSFSRIAYI). At 559–581 (LPANESFGPLQISLGRTVKDIFK) the chain is on the cytoplasmic side. A helical transmembrane segment spans residues 582-602 (FMVIFIMVFVAFMIGMFNLYS). Over 603–651 (YYRGAKYNPAFTTVEESFKTLFWSIFGLSEVISVVLKYDHKFIENIGYV) the chain is Extracellular. Residues 652–672 (LYGVYNVTMVVVLLNMLIAMI) traverse the membrane as a helical segment. At 673-862 (NNSYQEIEED…HLRVNKGKDI (190 aa)) the chain is on the cytoplasmic side.

It belongs to the transient receptor (TC 1.A.4) family. STrpC subfamily. TRPC7 sub-subfamily. As to quaternary structure, interacts with MX1 and RNF24. Interacts (via ANK-repeat domains) with PRKG1. In terms of processing, phosphorylation by PRKG1 at Thr-15 negatively regulates TRPC7 activity.

It is found in the cell membrane. The protein resides in the nucleus envelope. The enzyme catalyses Ca(2+)(in) = Ca(2+)(out). Its function is as follows. Forms a receptor-activated non-selective calcium permeant cation channel. Probably is operated by a phosphatidylinositol second messenger system activated by receptor tyrosine kinases or G-protein coupled receptors. Activated by diacylglycerol (DAG). May also be activated by intracellular calcium store depletion. This Homo sapiens (Human) protein is Short transient receptor potential channel 7 (TRPC7).